The following is a 399-amino-acid chain: Multi-drug resistance efflux pump PmrA (399 aa).

10 consecutive transmembrane segments (helical) span residues 12–34 (IAWF…MPIF), 49–71 (AGLA…GILA), 84–106 (GLAM…LIFL), 140–162 (LSTG…AELF), 167–186 (VFLL…ICFI), 217–239 (LFLT…ALYV), 248–270 (LLFV…AGVM), 306–328 (LGLY…NALL), 340–362 (VFAF…GSAV), and 366–388 (FGYH…FNLI).

The protein belongs to the major facilitator superfamily. TCR/Tet family.

It is found in the cell membrane. Functionally, efflux pump for various substrates. This Streptococcus pneumoniae serotype 4 (strain ATCC BAA-334 / TIGR4) protein is Multi-drug resistance efflux pump PmrA (pmrA).